The primary structure comprises 207 residues: Thiamine-phosphate synthase (207 aa).

Residues 35 to 39 (QYRDK) and Asn-67 each bind 4-amino-2-methyl-5-(diphosphooxymethyl)pyrimidine. The Mg(2+) site is built by Asp-68 and Asp-86. Thr-105 is a binding site for 4-amino-2-methyl-5-(diphosphooxymethyl)pyrimidine. 132–134 (SVT) lines the 2-[(2R,5Z)-2-carboxy-4-methylthiazol-5(2H)-ylidene]ethyl phosphate pocket. 4-amino-2-methyl-5-(diphosphooxymethyl)pyrimidine is bound at residue Lys-135. Gly-162 provides a ligand contact to 2-[(2R,5Z)-2-carboxy-4-methylthiazol-5(2H)-ylidene]ethyl phosphate.

The protein belongs to the thiamine-phosphate synthase family. Mg(2+) serves as cofactor.

It catalyses the reaction 2-[(2R,5Z)-2-carboxy-4-methylthiazol-5(2H)-ylidene]ethyl phosphate + 4-amino-2-methyl-5-(diphosphooxymethyl)pyrimidine + 2 H(+) = thiamine phosphate + CO2 + diphosphate. The enzyme catalyses 2-(2-carboxy-4-methylthiazol-5-yl)ethyl phosphate + 4-amino-2-methyl-5-(diphosphooxymethyl)pyrimidine + 2 H(+) = thiamine phosphate + CO2 + diphosphate. The catalysed reaction is 4-methyl-5-(2-phosphooxyethyl)-thiazole + 4-amino-2-methyl-5-(diphosphooxymethyl)pyrimidine + H(+) = thiamine phosphate + diphosphate. It functions in the pathway cofactor biosynthesis; thiamine diphosphate biosynthesis; thiamine phosphate from 4-amino-2-methyl-5-diphosphomethylpyrimidine and 4-methyl-5-(2-phosphoethyl)-thiazole: step 1/1. Functionally, condenses 4-methyl-5-(beta-hydroxyethyl)thiazole monophosphate (THZ-P) and 2-methyl-4-amino-5-hydroxymethyl pyrimidine pyrophosphate (HMP-PP) to form thiamine monophosphate (TMP). The sequence is that of Thiamine-phosphate synthase from Pseudomonas putida (strain W619).